Reading from the N-terminus, the 148-residue chain is MKIILTQEVSGLGAPGDIVEVKNGYGRNYLLPQGFAIAWTKGAEKQVTVIKRARSAREIRDLGHANEVKGQLEGLKVALKARAGEGGRLFGSVTAAEIVAAVKAAGGPTLDRRRLELPGHIKSLGSYPVRIKLHPEVTAAFDLSVVQG.

This sequence belongs to the bacterial ribosomal protein bL9 family.

Its function is as follows. Binds to the 23S rRNA. The polypeptide is Large ribosomal subunit protein bL9 (Salinispora tropica (strain ATCC BAA-916 / DSM 44818 / JCM 13857 / NBRC 105044 / CNB-440)).